We begin with the raw amino-acid sequence, 27 residues long: Pregnancy-associated glycoprotein 55 (27 aa).

It belongs to the peptidase A1 family. Glycosylated. Placenta.

The polypeptide is Pregnancy-associated glycoprotein 55 (PAG55) (Capra hircus (Goat)).